A 419-amino-acid chain; its full sequence is UDP-N-acetylglucosamine 1-carboxyvinyltransferase (419 aa).

Residue 22 to 23 (KN) coordinates phosphoenolpyruvate. Residue R95 participates in UDP-N-acetyl-alpha-D-glucosamine binding. The active-site Proton donor is C119. At C119 the chain carries 2-(S-cysteinyl)pyruvic acid O-phosphothioketal. Residues 164 to 167 (KVSV), D308, and I330 contribute to the UDP-N-acetyl-alpha-D-glucosamine site.

It belongs to the EPSP synthase family. MurA subfamily.

Its subcellular location is the cytoplasm. The catalysed reaction is phosphoenolpyruvate + UDP-N-acetyl-alpha-D-glucosamine = UDP-N-acetyl-3-O-(1-carboxyvinyl)-alpha-D-glucosamine + phosphate. It functions in the pathway cell wall biogenesis; peptidoglycan biosynthesis. In terms of biological role, cell wall formation. Adds enolpyruvyl to UDP-N-acetylglucosamine. The sequence is that of UDP-N-acetylglucosamine 1-carboxyvinyltransferase from Rickettsia canadensis (strain McKiel).